A 107-amino-acid chain; its full sequence is MGGKTVTRADLAEAVYRKVGLSRTESAALVEMILDEVCDAIVNGETVKLSSFATFQVRDKNERIGRNPKTGEEVPILPRRVMTFKASNVLKQRILQEHQKRQGKTSK.

Belongs to the bacterial histone-like protein family. Heterodimer of an alpha and a beta chain.

This protein is one of the two subunits of integration host factor, a specific DNA-binding protein that functions in genetic recombination as well as in transcriptional and translational control. In Brucella abortus (strain S19), this protein is Integration host factor subunit alpha.